Reading from the N-terminus, the 288-residue chain is Cytochrome b-c1 complex catalytic subunit, mitochondrial (288 aa).

Residues 12 to 34 (SMVQKFIAGGVGVTGLTASYLLY) traverse the membrane as a helical segment. Residues 69–222 (ASIRRGFQVY…DLVEYEDGTP (154 aa)) enclose the Cytochrome c domain. 3 residues coordinate heme c: cysteine 82, cysteine 85, and histidine 86. The segment covering 111-121 (EELEYDDEPDD) has biased composition (acidic residues). The interval 111–138 (EELEYDDEPDDEGKPRKRPGKLADYIPG) is disordered. Residues 250–268 (WGLKALVVLSSLYLLSIWV) form a helical membrane-spanning segment.

This sequence belongs to the cytochrome c family. In terms of assembly, component of the ubiquinol-cytochrome c oxidoreductase (cytochrome b-c1 complex, complex III, CIII), a multisubunit enzyme composed of 10 subunits. The complex is composed of 3 respiratory subunits cytochrome b (COB), cytochrome c1 (CYT1) and Rieske protein (RIP1), 2 core protein subunits COR1 and QCR2, and 5 low-molecular weight protein subunits QCR6, QCR7, QCR8, QCR9 and QCR10. The complex exists as an obligatory dimer and forms supercomplexes (SCs) in the inner mitochondrial membrane with a monomer or a dimer of cytochrome c oxidase (complex IV, CIV), resulting in 2 different assemblies (supercomplexes III(2)IV and III(2)IV(2)). It depends on heme c as a cofactor.

It is found in the mitochondrion inner membrane. It carries out the reaction a quinol + 2 Fe(III)-[cytochrome c](out) = a quinone + 2 Fe(II)-[cytochrome c](out) + 2 H(+)(out). Its function is as follows. Component of the ubiquinol-cytochrome c oxidoreductase, a multisubunit transmembrane complex that is part of the mitochondrial electron transport chain which drives oxidative phosphorylation. The complex plays an important role in the uptake of multiple carbon sources present in different host niches. The sequence is that of Cytochrome b-c1 complex catalytic subunit, mitochondrial from Candida albicans (strain SC5314 / ATCC MYA-2876) (Yeast).